Consider the following 279-residue polypeptide: Sulfur carrier protein FdhD (279 aa).

Cys122 functions as the Cysteine persulfide intermediate in the catalytic mechanism.

Belongs to the FdhD family.

The protein resides in the cytoplasm. Its function is as follows. Required for formate dehydrogenase (FDH) activity. Acts as a sulfur carrier protein that transfers sulfur from IscS to the molybdenum cofactor prior to its insertion into FDH. The chain is Sulfur carrier protein FdhD from Thermoplasma volcanium (strain ATCC 51530 / DSM 4299 / JCM 9571 / NBRC 15438 / GSS1).